The chain runs to 320 residues: MPKKKTGARKKAENRREREKQLRASRSTIDLAKHPCNASMECDKCQRRQKNRAFCYFCNSVQKLPICAQCGKTKCMMKSSDCVIKHAGVYSTGLAMVGAICDFCEAWVCHGRKCLSTHACACPLTDAECVECERGVWDHGGRIFSCSFCHNFLCEDDQFEHQASCQVLEAETFKCVSCNRLGQHSCLRCKACFCDDHTRSKVFKQEKGKQPPCPKCGHETQETKDLSMSTRSLKFGRQTGGEEGDGASGYDAYWKNLASDKYAGASYHDEEEDEYEAEDDEEEEDEGGKDSDAESSDLFTNLNLGRTYASGYAHYEEQEN.

The tract at residues 1–23 (MPKKKTGARKKAENRREREKQLR) is disordered. The Nuclear localization signal signature appears at 3-11 (KKKTGARKK). Over residues 10-22 (KKAENRREREKQL) the composition is skewed to basic and acidic residues. 4 C4-type zinc fingers span residues 42-58 (CDKCQRRQKNRAFCYFC), 67-104 (CAQCGKTKCMMKSSDCVIKHAGVYSTGLAMVGAICDFC), 129-149 (CVECERGVWDHGGRIFSCSFC), and 175-189 (CVSCNRLGQHSCLRC). Disordered regions lie at residues 206-250 (EKGK…ASGY) and 264-303 (GASYHDEEEDEYEAEDDEEEEDEGGKDSDAESSDLFTNLN). Basic and acidic residues predominate over residues 216–225 (CGHETQETKD). Positions 269 to 287 (DEEEDEYEAEDDEEEEDEG) are enriched in acidic residues. A Phosphoserine modification is found at Ser-291.

It belongs to the NOA36 family.

It localises to the nucleus. The protein localises to the nucleolus. Its subcellular location is the chromosome. The protein resides in the centromere. This is Zinc finger protein 330 (ZNF330) from Bos taurus (Bovine).